We begin with the raw amino-acid sequence, 102 residues long: ATP-dependent Clp protease adapter protein ClpS (102 aa).

It belongs to the ClpS family. Binds to the N-terminal domain of the chaperone ClpA.

Involved in the modulation of the specificity of the ClpAP-mediated ATP-dependent protein degradation. This chain is ATP-dependent Clp protease adapter protein ClpS, found in Desulfotalea psychrophila (strain LSv54 / DSM 12343).